The sequence spans 311 residues: Ribosomal RNA small subunit methyltransferase H (311 aa).

S-adenosyl-L-methionine is bound by residues 41 to 43 (GGH), Asp-61, Phe-85, Asp-102, and Gln-109.

The protein belongs to the methyltransferase superfamily. RsmH family.

It is found in the cytoplasm. It catalyses the reaction cytidine(1402) in 16S rRNA + S-adenosyl-L-methionine = N(4)-methylcytidine(1402) in 16S rRNA + S-adenosyl-L-homocysteine + H(+). Specifically methylates the N4 position of cytidine in position 1402 (C1402) of 16S rRNA. This is Ribosomal RNA small subunit methyltransferase H from Paracidovorax citrulli (strain AAC00-1) (Acidovorax citrulli).